The following is a 297-amino-acid chain: Cell division protein ZipA (297 aa).

Residue Met-1 is a topological domain, periplasmic. The helical transmembrane segment at 2 to 22 threads the bilayer; sequence EIGLREWLILIGIIVIAGILF. The Cytoplasmic segment spans residues 23–297; that stretch reads DGWRRMRGGK…FERRALTQKR (275 aa). Positions 48–151 are disordered; sequence DEEGGSAEVL…AAPASNSVKE (104 aa). The segment covering 83–92 has biased composition (basic and acidic residues); sequence ARDREREPKP. A compositionally biased stretch (acidic residues) spans 124–133; it reads LFSDSDDDFA.

Belongs to the ZipA family. In terms of assembly, interacts with FtsZ via their C-terminal domains.

Its subcellular location is the cell inner membrane. Its function is as follows. Essential cell division protein that stabilizes the FtsZ protofilaments by cross-linking them and that serves as a cytoplasmic membrane anchor for the Z ring. Also required for the recruitment to the septal ring of downstream cell division proteins. The chain is Cell division protein ZipA from Pseudomonas putida (strain ATCC 47054 / DSM 6125 / CFBP 8728 / NCIMB 11950 / KT2440).